The sequence spans 364 residues: C3a anaphylatoxin chemotactic receptor (364 aa).

The Extracellular portion of the chain corresponds to 1 to 50; the sequence is MGDNMDFSEHYGNFSENYVTESYGEFDLYYDPLNETSLSEQGHRSIWVLS. N-linked (GlcNAc...) asparagine glycans are attached at residues Asn13 and Asn34. The chain crosses the membrane as a helical span at residues 51-71; it reads IVLCSIACVLGITGNAFVIWI. Residues 72–82 lie on the Cytoplasmic side of the membrane; it reads AGVKMKRTVNT. A helical transmembrane segment spans residues 83 to 103; the sequence is IWFVNLAAADLLCCVSIPFSI. Over 104–120 the chain is Extracellular; that stretch reads ADIILNSHWPYGEAMCK. Cys119 and Cys198 are joined by a disulfide. Residues 121-141 form a helical membrane-spanning segment; it reads ILPSMVVLNMFASVFTLVLIS. Over 142–159 the chain is Cytoplasmic; it reads LDRFALVILPVWAQNHRS. The chain crosses the membrane as a helical span at residues 160 to 180; sequence ITLAWLLCGLVWVLGLLLSLP. The Extracellular portion of the chain corresponds to 181 to 220; that stretch reads SMIYREIVVHDDMNITLCIYNHLQDKTEGNQSAIKAIHVT. The helical transmembrane segment at 221-241 threads the bilayer; it reads RLILGFLIPLLVIAVCYLLIG. Over 242–256 the chain is Cytoplasmic; the sequence is RRVSSGRFKSQRAFQ. A helical transmembrane segment spans residues 257–277; it reads IILVVVTTFFVCWLPYHVIGL. Topologically, residues 278-295 are extracellular; that stretch reads VIEYGKEASQVMARALDP. A helical transmembrane segment spans residues 296–316; that stretch reads LAISLAYVNSCLNPVLYVFMG. Over 317–364 the chain is Cytoplasmic; the sequence is QDFKERVRVSLRKIFEKVFSEDVTLRSSVYSKGQSQLSRATNSSEAQV.

This sequence belongs to the G-protein coupled receptor 1 family.

It localises to the cell membrane. Functionally, receptor for the chemotactic and inflammatory peptide anaphylatoxin C3a. This receptor stimulates chemotaxis, granule enzyme release and superoxide anion production. This is C3a anaphylatoxin chemotactic receptor (c3ar1) from Oncorhynchus mykiss (Rainbow trout).